Here is a 173-residue protein sequence, read N- to C-terminus: MAAYLTNRVLMSSLMFFVMTGSLNAQVADIKAICGKAKNQSFCTSYMKSNPKTSGADLQTLANITFGSAQTSASEGFRKIQSLVKTATNPTMKKAYTSCVQHYKSAISSLNDAKQSLASGDGKGLNIKVSAAMEGPSTCEQDMADFKVDPSAVKNSGDFQNICGIVLVISNMM.

An N-terminal signal peptide occupies residues 1–25 (MAAYLTNRVLMSSLMFFVMTGSLNA). Cysteine 34 and cysteine 43 are disulfide-bonded. Residues asparagine 39 and asparagine 63 are each glycosylated (N-linked (GlcNAc...) asparagine). An intrachain disulfide couples cysteine 99 to cysteine 139.

The protein belongs to the PMEI family. As to quaternary structure, interacts with PPME1. Highest expression in flowers. Expressed exclusively at the pollen tube tip.

The protein localises to the secreted. Its subcellular location is the extracellular space. It localises to the apoplast. Functionally, inhibits pectin methylesterase (PME) from flowers, siliques and pollen tube. The chain is Pectinesterase inhibitor 2 from Arabidopsis thaliana (Mouse-ear cress).